Consider the following 946-residue polypeptide: Protein RRC1 (946 aa).

Disordered stretches follow at residues 1 to 29 (MSSF…KAED) and 41 to 183 (SFQG…NLYV). 3 stretches are compositionally biased toward basic and acidic residues: residues 15–29 (KHRE…KAED), 62–75 (DKPK…KSKD), and 98–147 (KGKE…DRQG). The region spanning 179-260 (TNLYVGNLSP…YELKIGWGKA (82 aa)) is the RRM domain. Residues 329–372 (VIDTLALYVLDGECAFEQAIMERGRGNPLFKFMFELGSKEHTYY) form an SURP motif repeat. A CID domain is found at 437-582 (LTDPQRDEFE…GLRSTFLRSG (146 aa)). Residues 631-665 (LMNLPIAELERRCRHNGLSLVGGRVMMVTRLLSLE) enclose the SAP domain. Disordered stretches follow at residues 740-797 (ASKW…EQRQ) and 836-946 (EVDY…RGTR). Residues 757–767 (SSSSGSDNTGG) are compositionally biased toward polar residues. Basic and acidic residues-rich tracts occupy residues 772 to 781 (ADGEDLKGND), 854 to 868 (IIER…QESS), and 886 to 946 (STRE…RGTR).

As to quaternary structure, component of the SWAP1-SFPS-RRC1 splicing factor complex which modulates pre-mRNA splicing to promote photomorphogenesis. Interacts with SWAP1 in a light-independent manner. In terms of tissue distribution, expressed in leaves, inflorescence stems, roots, flower buds, open flowers and siliques.

It localises to the nucleus speckle. Its function is as follows. As a member of the SWAP1-SFPS-RRC1 splicing factor complex, modulates photomorphogenesis by regulating the gene expression and pre-messenger RNA (mRNA) alternative splicing of a large number of genes, including those involved in plant responses to light signaling. SR-like splicing factor required for phytochrome B (phyB) signal transduction and involved in phyB-dependent alternative splicing. The sequence is that of Protein RRC1 from Arabidopsis thaliana (Mouse-ear cress).